The sequence spans 465 residues: Phosphatidylserine synthase 1 (465 aa).

Topologically, residues 1-35 (MVSAMRSRTLSKDDVNYKMHFRMINEQQVEDITID) are cytoplasmic. The chain crosses the membrane as a helical span at residues 36-56 (FFYKPHTITLLTFTTVSLMYF). Topologically, residues 57-68 (AFTRENTSQEDN) are lumenal. Residues 69 to 89 (IWKGILSVIFFFLIISVLAFP) form a helical membrane-spanning segment. The Cytoplasmic segment spans residues 90–102 (NGPFTRPHPAIWR). The helical transmembrane segment at 103 to 123 (MVFGLSVLYFLFLVFLLFLNV) threads the bilayer. Topologically, residues 124 to 186 (EQVKAVMYWL…AMKALLIRSY (63 aa)) are lumenal. The chain crosses the membrane as a helical span at residues 187-207 (GLCWTISITWEMTELFFMHLL). At 208–216 (PNFAECWWD) the chain is on the cytoplasmic side. The helical transmembrane segment at 217–237 (QVILDILLCNGGGILLGMVVC) threads the bilayer. At 238–286 (RFLEMRTYHWASFKDIHTTTGKIKRAVLQFTPASWIYVRWFDPKSSFQR) the chain is on the lumenal side. Residues 287 to 307 (VAGVYLFMIIWQLTELNTFFL) traverse the membrane as a helical segment. Topologically, residues 308–319 (KHIFVFQASHPL) are cytoplasmic. The helical transmembrane segment at 320–342 (SWCRILFIGIITAPTVRQYYAYL) threads the bilayer. Topologically, residues 343–355 (TDTQCKRVGTQCW) are lumenal. Residues 356 to 376 (VFGAIAFLEATVCIKFGQDLF) form a helical membrane-spanning segment. Topologically, residues 377–383 (SKTHLLY) are cytoplasmic. The helical transmembrane segment at 384–404 (VFLWLFSVAVITFLCLYGMVW) threads the bilayer. Topologically, residues 405–465 (YADYCGQREK…GKVTNGVGKK (61 aa)) are lumenal. Positions 440–465 (PVKQNEGTSRRKNRHKGKVTNGVGKK) are disordered. Positions 449-465 (RRKNRHKGKVTNGVGKK) are enriched in basic residues.

It belongs to the phosphatidyl serine synthase family.

The protein resides in the endoplasmic reticulum membrane. The catalysed reaction is a 1,2-diacyl-sn-glycero-3-phosphoethanolamine + L-serine = a 1,2-diacyl-sn-glycero-3-phospho-L-serine + ethanolamine. The enzyme catalyses a 1,2-diacyl-sn-glycero-3-phosphocholine + L-serine = a 1,2-diacyl-sn-glycero-3-phospho-L-serine + choline. Its pathway is phospholipid metabolism; phosphatidylserine biosynthesis. Catalyzes a base-exchange reaction in which the polar head group of phosphatidylethanolamine (PE) or phosphatidylcholine (PC) is replaced by L-serine. Catalyzes mainly the conversion of phosphatidylcholine but also converts, in vitro and to a lesser extent, phosphatidylethanolamine. This chain is Phosphatidylserine synthase 1 (ptdss1), found in Xenopus tropicalis (Western clawed frog).